Reading from the N-terminus, the 1133-residue chain is Protein cordon-bleu (1133 aa).

The span at 1–11 shows a compositional bias: pro residues; it reads MKARAPPPPGK. Positions 1–25 are disordered; the sequence is MKARAPPPPGKPAAQNVHSEQKLPH. 6 positions are modified to phosphoserine: S31, S34, S196, S219, S256, and S278. Disordered stretches follow at residues 246–393 and 442–568; these read AEHL…SVNG and QGGI…GQAS. The segment covering 272 to 301 has biased composition (polar residues); sequence CVTTPNSPSLHSRSLTLGPSLSLGNISGMS. The KKRRAP 1 signature appears at 307-312; sequence KKRRAP. Residues S330 and S333 each carry the phosphoserine modification. A KKRRAP 2 motif is present at residues 340 to 345; sequence KKRRAP. Residues 345–358 show a composition bias toward pro residues; it reads PAPPPPQPPPPSPV. Position 356 is a phosphoserine (S356). Residues 361–371 are compositionally biased toward basic and acidic residues; sequence NRKEDKEENRK. 2 stretches are compositionally biased toward polar residues: residues 382-393 and 442-464; these read TDTSSLTSSVNG and QGGI…QPFI. S447 is modified (phosphoserine). The span at 512 to 524 shows a compositional bias: basic and acidic residues; it reads STDDPKAKDKDKM. S614 bears the Phosphoserine mark. The segment at 664 to 720 is disordered; the sequence is APSTTITATSEKPQRDETKAGFTLTTPEQQPASQEYGAPPEEDRSRPHSAVSCPVKV. 2 stretches are compositionally biased toward polar residues: residues 665 to 674 and 686 to 696; these read PSTTITATSE and TLTTPEQQPAS. S924 is subject to Phosphoserine. 2 disordered regions span residues 942-961 and 990-1018; these read PSPL…SSIF and HTSG…YVEA. WH2 domains lie at 981 to 1001 and 1021 to 1041; these read LHSA…LRKT and ERSA…LRKV. Residues 993–1010 are compositionally biased toward basic and acidic residues; sequence GGRDKLRKTAEQASEGRP. The segment at 1063-1091 is disordered; that stretch reads DKPQQEDRGLPPPPALPPPSTPASQVPSA. Residues 1072-1083 show a composition bias toward pro residues; the sequence is LPPPPALPPPST. The residue at position 1099 (S1099) is a Phosphoserine. The WH2 3 domain occupies 1109-1129; it reads ARQALMDAIRSGTGAARLRKV.

As to quaternary structure, identified in a complex composed of ACTA1, COBL, GSN AND TMSB4X. Identified in a complex composed of COBL, PACSIN1 and WASL. Interacts with PACSIN1, PACSIN2 and PACSIN3. Interacts (via WH2 domains) with actin monomers. Interacts with both PACSIN1 and DBNL. As to expression, detected in brain (at protein level).

The protein localises to the cell membrane. It localises to the cytoplasm. The protein resides in the cytoskeleton. It is found in the cell projection. Its subcellular location is the ruffle. The protein localises to the cytosol. Plays an important role in the reorganization of the actin cytoskeleton. Binds to and sequesters actin monomers (G actin). Nucleates actin polymerization by assembling three actin monomers in cross-filament orientation and thereby promotes growth of actin filaments at the barbed end. Can also mediate actin depolymerization at barbed ends and severing of actin filaments. Promotes formation of cell ruffles. Regulates dendrite branching in Purkinje cells. Regulates neuron morphogenesis and increases branching of axons and dendrites. This chain is Protein cordon-bleu (Cobl), found in Rattus norvegicus (Rat).